The chain runs to 878 residues: uncharacterized protein (878 aa).

Disordered stretches follow at residues 58-223 (IGVD…RTKF), 306-494 (KGRL…TSSR), 585-652 (KLLE…SGKL), and 679-709 (PSSMVTIPSPSSSCSSTSSIIGSSSSSGGGG). Composition is skewed to low complexity over residues 64-213 (NGNS…SGTS), 314-325 (SNSSQSSDSDYS), and 335-355 (IPNSTLSSSSTLPIPSNPNSN). A compositionally biased stretch (polar residues) spans 362–372 (RNPNQLSSTNV). Low complexity predominate over residues 373–494 (NNNINNSGGS…TPTTPVTSSR (122 aa)). The segment covering 585-595 (KLLEQQKEQQQ) has biased composition (basic and acidic residues). Residues 596 to 605 (KEQQQQQKQQ) show a composition bias toward low complexity. The span at 615–624 (TDDEDEDDDE) shows a compositional bias: acidic residues. 2 stretches are compositionally biased toward low complexity: residues 639–652 (NLSNNSSNKGSGKL) and 679–704 (PSSMVTIPSPSSSCSSTSSIIGSSSS).

This is an uncharacterized protein from Dictyostelium discoideum (Social amoeba).